A 911-amino-acid chain; its full sequence is Eukaryotic translation initiation factor 3 subunit C (911 aa).

2 disordered regions span residues 1-38 (MSRF…DDEE) and 155-181 (SRFR…GEAA). Residues 11 to 20 (SESESSEEEV) show a composition bias toward acidic residues. Positions 23–32 (PNFNKASAFQ) are enriched in polar residues. A phosphoserine mark is found at S34, S165, S175, and S184. Residues 162–171 (DQESEAEDEE) show a composition bias toward acidic residues. The segment covering 196–208 (APKIAKSAPAKSV) has biased composition (low complexity). Residues 196–284 (APKIAKSAPA…KRAEDDEDGE (89 aa)) are disordered. Residues 210 to 236 (ADDEDSDDSIDWDSDSESETESSEDEN) are compositionally biased toward acidic residues. Basic and acidic residues predominate over residues 241–271 (MRERFLKRSTEKGEDKGDDDKRKDKRKEQKL). The PCI domain occupies 642 to 818 (FHMHINLELL…ETVVMHRSEP (177 aa)). The interval 851-911 (FQRGNMGNRG…QQQVQTIDEE (61 aa)) is disordered. A compositionally biased stretch (basic residues) spans 885–896 (QRNRNQRGHHKN). Low complexity predominate over residues 897–911 (QQQQQQQQVQTIDEE).

Belongs to the eIF-3 subunit C family. Component of the eukaryotic translation initiation factor 3 (eIF-3) complex. The eIF-3 complex interacts with pix.

The protein resides in the cytoplasm. Component of the eukaryotic translation initiation factor 3 (eIF-3) complex, which is involved in protein synthesis of a specialized repertoire of mRNAs and, together with other initiation factors, stimulates binding of mRNA and methionyl-tRNAi to the 40S ribosome. The eIF-3 complex specifically targets and initiates translation of a subset of mRNAs involved in cell proliferation. The chain is Eukaryotic translation initiation factor 3 subunit C from Drosophila pseudoobscura pseudoobscura (Fruit fly).